The following is a 179-amino-acid chain: Large ribosomal subunit protein uL6 (179 aa).

This sequence belongs to the universal ribosomal protein uL6 family. As to quaternary structure, part of the 50S ribosomal subunit.

Functionally, this protein binds to the 23S rRNA, and is important in its secondary structure. It is located near the subunit interface in the base of the L7/L12 stalk, and near the tRNA binding site of the peptidyltransferase center. The sequence is that of Large ribosomal subunit protein uL6 from Bifidobacterium longum (strain DJO10A).